Reading from the N-terminus, the 76-residue chain is Exodeoxyribonuclease 7 small subunit (76 aa).

Belongs to the XseB family. As to quaternary structure, heterooligomer composed of large and small subunits.

The protein resides in the cytoplasm. It catalyses the reaction Exonucleolytic cleavage in either 5'- to 3'- or 3'- to 5'-direction to yield nucleoside 5'-phosphates.. Functionally, bidirectionally degrades single-stranded DNA into large acid-insoluble oligonucleotides, which are then degraded further into small acid-soluble oligonucleotides. This Bacillus cytotoxicus (strain DSM 22905 / CIP 110041 / 391-98 / NVH 391-98) protein is Exodeoxyribonuclease 7 small subunit.